The following is a 365-amino-acid chain: tRNA/tmRNA (uracil-C(5))-methyltransferase (365 aa).

The S-adenosyl-L-methionine site is built by Gln189, Tyr217, Asn222, Glu238, and Asp298. Cys323 functions as the Nucleophile in the catalytic mechanism. Residue Glu357 is the Proton acceptor of the active site.

The protein belongs to the class I-like SAM-binding methyltransferase superfamily. RNA M5U methyltransferase family. TrmA subfamily.

It catalyses the reaction uridine(54) in tRNA + S-adenosyl-L-methionine = 5-methyluridine(54) in tRNA + S-adenosyl-L-homocysteine + H(+). The enzyme catalyses uridine(341) in tmRNA + S-adenosyl-L-methionine = 5-methyluridine(341) in tmRNA + S-adenosyl-L-homocysteine + H(+). In terms of biological role, dual-specificity methyltransferase that catalyzes the formation of 5-methyluridine at position 54 (m5U54) in all tRNAs, and that of position 341 (m5U341) in tmRNA (transfer-mRNA). This is tRNA/tmRNA (uracil-C(5))-methyltransferase from Proteus mirabilis (strain HI4320).